Reading from the N-terminus, the 238-residue chain is RNA pyrophosphohydrolase (238 aa).

A Nudix hydrolase domain is found at 6–149 (GFRPNVGIIL…KREVYQMALS (144 aa)). A Nudix box motif is present at residues 38-59 (GGIKYGETPEQAMYRELHEEVG). Residues 161–238 (APLSPYGRGG…PDDTPSKDSL (78 aa)) form a disordered region. The segment covering 171 to 181 (PHRERDGRDNR) has biased composition (basic and acidic residues). Residues 188–199 (RNDQNTRGQRQP) are compositionally biased toward polar residues. The span at 204–217 (VTTSTVIVETVITS) shows a compositional bias: low complexity.

The protein belongs to the Nudix hydrolase family. RppH subfamily. A divalent metal cation is required as a cofactor.

Its function is as follows. Accelerates the degradation of transcripts by removing pyrophosphate from the 5'-end of triphosphorylated RNA, leading to a more labile monophosphorylated state that can stimulate subsequent ribonuclease cleavage. This Ralstonia nicotianae (strain ATCC BAA-1114 / GMI1000) (Ralstonia solanacearum) protein is RNA pyrophosphohydrolase.